The following is a 514-amino-acid chain: Chromosomal replication initiator protein DnaA (514 aa).

The tract at residues 1–90 (MSVELWQQCV…KRSRTPRAAI (90 aa)) is domain I, interacts with DnaA modulators. The interval 91–177 (VPSQTHVAPP…QVEGALKHTS (87 aa)) is domain II. The segment at 178 to 394 (YLNRTFTFEN…GALKRVIAHS (217 aa)) is domain III, AAA+ region. Positions 222, 224, 225, and 226 each coordinate ATP. The segment at 395 to 514 (HFMGRPITIE…YKNLLRTLTT (120 aa)) is domain IV, binds dsDNA.

Belongs to the DnaA family. Oligomerizes as a right-handed, spiral filament on DNA at oriC.

It is found in the cytoplasm. Its function is as follows. Plays an essential role in the initiation and regulation of chromosomal replication. ATP-DnaA binds to the origin of replication (oriC) to initiate formation of the DNA replication initiation complex once per cell cycle. Binds the DnaA box (a 9 base pair repeat at the origin) and separates the double-stranded (ds)DNA. Forms a right-handed helical filament on oriC DNA; dsDNA binds to the exterior of the filament while single-stranded (ss)DNA is stabiized in the filament's interior. The ATP-DnaA-oriC complex binds and stabilizes one strand of the AT-rich DNA unwinding element (DUE), permitting loading of DNA polymerase. After initiation quickly degrades to an ADP-DnaA complex that is not apt for DNA replication. Binds acidic phospholipids. The sequence is that of Chromosomal replication initiator protein DnaA from Pseudomonas aeruginosa (strain LESB58).